A 450-amino-acid polypeptide reads, in one-letter code: MTENEQIFWNRVLELAQSQLKQATYEFFVHDARLIKVDNHVATIFLDQMKELFWEKNLKDVILTAGFEVYNAQIAVDYVYEDDLMIEQQHQGQQGYTEQAFQQLPAVQSDLNPKYSFDNFIQGDENRWAVAASIAVANTPGTTYNPLFIWGGPGLGKTHLLNAIGNSVLLENPNARIKYITAENFINEFVVHIRLDTMDELKEKFRNLDLLLIDDIQSLAKKTLSGTQEEFFNTFNALHNNNKQIVLTSDRTPDHLNDLEDRLVTRFKWGLTVNITPPDFETRVAILTNKIQEYNFIFPQDTIEYLAGQFDSNVRDLEGALKDISLVANFKQIDTITVDIAAEAIRARKQDGPKMTVIPIEEIQAQVGKFYGVTVKEIKATKRTQDIVLARQVAMFLAREMTDNSLPKIGKEFGGRDHSTVLHAYNKIKNMIGQDESLRIEIETIKNKIK.

The domain I, interacts with DnaA modulators stretch occupies residues 1 to 77 (MTENEQIFWN…EVYNAQIAVD (77 aa)). A domain II region spans residues 77 to 109 (DYVYEDDLMIEQQHQGQQGYTEQAFQQLPAVQS). Residues 110-328 (DLNPKYSFDN…GALKDISLVA (219 aa)) form a domain III, AAA+ region region. ATP is bound by residues Gly154, Gly156, Lys157, and Thr158. The segment at 329–450 (NFKQIDTITV…EIETIKNKIK (122 aa)) is domain IV, binds dsDNA.

Belongs to the DnaA family. Oligomerizes as a right-handed, spiral filament on DNA at oriC.

The protein resides in the cytoplasm. Plays an essential role in the initiation and regulation of chromosomal replication. ATP-DnaA binds to the origin of replication (oriC) to initiate formation of the DNA replication initiation complex once per cell cycle. Binds the DnaA box (a 9 base pair repeat at the origin) and separates the double-stranded (ds)DNA. Forms a right-handed helical filament on oriC DNA; dsDNA binds to the exterior of the filament while single-stranded (ss)DNA is stabiized in the filament's interior. The ATP-DnaA-oriC complex binds and stabilizes one strand of the AT-rich DNA unwinding element (DUE), permitting loading of DNA polymerase. After initiation quickly degrades to an ADP-DnaA complex that is not apt for DNA replication. Binds acidic phospholipids. The protein is Chromosomal replication initiator protein DnaA of Streptococcus equi subsp. equi (strain 4047).